A 277-amino-acid chain; its full sequence is tRNA (guanine-N(7)-)-methyltransferase (277 aa).

The interval 1 to 37 (MAGTETGDAAGTEAPQPQKRYYRQRAHSNPMADHTLR) is disordered. The residue at position 28 (Ser-28) is a Phosphoserine. Residues Gly-85, Glu-108, Arg-110, Asn-141, Ala-142, and Leu-161 each coordinate S-adenosyl-L-methionine. Asp-164 is a catalytic residue. Residues 165-173 (PHFKRTKHK) form an alphaC helix region. S-adenosyl-L-methionine is bound by residues Thr-239 and Glu-241. The alpha6 helix stretch occupies residues 239–247 (TEEGKKVLR).

Belongs to the class I-like SAM-binding methyltransferase superfamily. TrmB family. As to quaternary structure, catalytic component of the METTL1-WDR4 complex, composed of METTL1 and WDR4. In terms of processing, phosphorylation at Ser-28 by PKB/AKT1 inactivates its methyltransferase activity via a steric interference mechanism in the active site that locally disrupts the catalytic center. Phosphorylation at Ser-28 does not affect the interaction with WDR4.

The protein localises to the nucleus. It carries out the reaction guanosine(46) in tRNA + S-adenosyl-L-methionine = N(7)-methylguanosine(46) in tRNA + S-adenosyl-L-homocysteine. The catalysed reaction is a guanosine in mRNA + S-adenosyl-L-methionine = an N(7)-methylguanosine in mRNA + S-adenosyl-L-homocysteine. The enzyme catalyses a guanosine in miRNA + S-adenosyl-L-methionine = an N(7)-methylguanosine in miRNA + S-adenosyl-L-homocysteine. Its pathway is tRNA modification; N(7)-methylguanine-tRNA biosynthesis. In terms of biological role, catalytic component of METTL1-WDR4 methyltransferase complex that mediates the formation of N(7)-methylguanine in a subset of RNA species, such as tRNAs, mRNAs and microRNAs (miRNAs). Catalyzes the formation of N(7)-methylguanine at position 46 (m7G46) in a large subset of tRNAs that contain the 5'-RAGGU-3' motif within the variable loop. M7G46 interacts with C13-G22 in the D-loop to stabilize tRNA tertiary structure and protect tRNAs from decay. Also acts as a methyltransferase for a subset of internal N(7)-methylguanine in mRNAs. Internal N(7)-methylguanine methylation of mRNAs in response to stress promotes their relocalization to stress granules, thereby suppressing their translation. Also methylates a specific subset of miRNAs, such as let-7. N(7)-methylguanine methylation of let-7 miRNA promotes let-7 miRNA processing by disrupting an inhibitory secondary structure within the primary miRNA transcript (pri-miRNA). Acts as a regulator of embryonic stem cell self-renewal and differentiation. This chain is tRNA (guanine-N(7)-)-methyltransferase, found in Bos taurus (Bovine).